The following is a 101-amino-acid chain: Rho GTPase-activating protein 39 (101 aa).

Residues 1 to 96 enclose the Rho-GAP domain; it reads YEQCIAHYES…VLIQHLDTSF (96 aa).

Preoptic area and testis.

This is Rho GTPase-activating protein 39 (Arhgap39) from Rattus norvegicus (Rat).